The sequence spans 133 residues: Phosphoribosyl-ATP pyrophosphatase (133 aa).

Positions methionine 1 to aspartate 22 are disordered.

It belongs to the PRA-PH family.

It is found in the cytoplasm. It catalyses the reaction 1-(5-phospho-beta-D-ribosyl)-ATP + H2O = 1-(5-phospho-beta-D-ribosyl)-5'-AMP + diphosphate + H(+). The protein operates within amino-acid biosynthesis; L-histidine biosynthesis; L-histidine from 5-phospho-alpha-D-ribose 1-diphosphate: step 2/9. The chain is Phosphoribosyl-ATP pyrophosphatase from Gluconobacter oxydans (strain 621H) (Gluconobacter suboxydans).